Reading from the N-terminus, the 795-residue chain is Cyclin-dependent kinase 11B (795 aa).

The span at Leu-17–Ile-60 shows a compositional bias: basic and acidic residues. Residues Leu-17–Ala-412 are disordered. Residues Ser-47 and Ser-72 each carry the phosphoserine modification. Over residues Glu-95–Ser-113 the composition is skewed to basic residues. Composition is skewed to basic and acidic residues over residues His-114–His-131, Arg-138–Lys-227, Pro-238–Glu-253, and Gln-264–Leu-276. Residue Ser-115 is modified to Phosphoserine. Ser-283 carries the phosphoserine modification. The segment covering Ser-291 to Gly-302 has biased composition (low complexity). 2 stretches are compositionally biased toward acidic residues: residues Ser-303–Glu-364 and Glu-383–Gly-392. A Protein kinase domain is found at Phe-438–Phe-723. ATP is bound by residues Ile-444–Val-452 and Lys-467. Position 482 is a phosphoserine; by CDK7 (Ser-482). Residue Thr-488 is modified to Phosphothreonine; by CDK7. The active-site Proton acceptor is Asp-562. Position 589 is a phosphoserine (Ser-589). The residue at position 594 (Tyr-594) is a Phosphotyrosine. Phosphothreonine is present on Thr-595. Residue Lys-641 forms a Glycyl lysine isopeptide (Lys-Gly) (interchain with G-Cter in SUMO2) linkage. Residues Ser-733 to Phe-795 are disordered. Position 751 is a phosphothreonine (Thr-751). Residue Ser-752 is modified to Phosphoserine.

This sequence belongs to the protein kinase superfamily. CMGC Ser/Thr protein kinase family. CDC2/CDKX subfamily. Cleaved isoform SV9 (p110C) binds to the serine/threonine kinase PAK1 and RANBP9. p110C interacts with RNPS1. Isoform 7, but not isoform SV9, nor its cleavage product p110C, interacts with CCND3. Interacts with CCNL1 and CCNL2. Forms complexes with pre-mRNA-splicing factors, including at least SRSF1, SRSF2 and SRSF7/SLU7. Interacts with isoform 5 of MYO18A. As to quaternary structure, (Microbial infection) Interacts with human herpes virus 1 (HHV-1) transcriptional regulator ICP22. Mg(2+) is required as a cofactor. In terms of processing, during FAS- or TNF-induced apoptosis, isoform SV9 is cleaved by caspases to produce p110C, a fragment that contains the C-terminal kinase domain. Post-translationally, phosphorylation at Ser-115 creates a binding site for 14-3-3 proteins. p110C can be autophosphorylated. In terms of tissue distribution, expressed ubiquitously. Some evidence of isoform-specific tissue distribution.

The protein localises to the cytoplasm. It is found in the nucleus. The catalysed reaction is L-seryl-[protein] + ATP = O-phospho-L-seryl-[protein] + ADP + H(+). It carries out the reaction L-threonyl-[protein] + ATP = O-phospho-L-threonyl-[protein] + ADP + H(+). Its activity is regulated as follows. Phosphorylation at Thr-448 or Tyr-449 inactivates the enzyme, while phosphorylation at Thr-595 activates it. Functionally, plays multiple roles in cell cycle progression, cytokinesis and apoptosis. Involved in pre-mRNA splicing in a kinase activity-dependent manner. Isoform 7 may act as a negative regulator of normal cell cycle progression. The chain is Cyclin-dependent kinase 11B (CDK11B) from Homo sapiens (Human).